The sequence spans 239 residues: Demethylmenaquinone methyltransferase (239 aa).

S-adenosyl-L-methionine is bound by residues threonine 60, aspartate 81, and 106-107 (DA).

Belongs to the class I-like SAM-binding methyltransferase superfamily. MenG/UbiE family.

The enzyme catalyses a 2-demethylmenaquinol + S-adenosyl-L-methionine = a menaquinol + S-adenosyl-L-homocysteine + H(+). It participates in quinol/quinone metabolism; menaquinone biosynthesis; menaquinol from 1,4-dihydroxy-2-naphthoate: step 2/2. In terms of biological role, methyltransferase required for the conversion of demethylmenaquinol (DMKH2) to menaquinol (MKH2). The protein is Demethylmenaquinone methyltransferase of Staphylococcus haemolyticus (strain JCSC1435).